Consider the following 282-residue polypeptide: HTH-type transcriptional activator RhaR (282 aa).

Positions 179–277 (DKLITALANS…GMTPSQWRHL (99 aa)) constitute an HTH araC/xylS-type domain. DNA-binding regions (H-T-H motif) lie at residues 196–217 (DAFC…RAQT) and 244–267 (VSEI…TRET).

In terms of assembly, binds DNA as a dimer.

Its subcellular location is the cytoplasm. Its function is as follows. Activates expression of the rhaSR operon in response to L-rhamnose. In Salmonella choleraesuis (strain SC-B67), this protein is HTH-type transcriptional activator RhaR.